The primary structure comprises 600 residues: Transcription factor rlmA (600 aa).

The MADS-box domain maps to 1–61 (MGRRKIEIKA…KKLYEFSSCD (61 aa)). Disordered regions lie at residues 71–518 (YYGP…NIET) and 544–600 (GFGR…KSKT). Positions 75-89 (PHEHKGPEDFNGKRD) are enriched in basic and acidic residues. Positions 151-160 (PQPQGASRPS) are enriched in polar residues. A compositionally biased stretch (pro residues) spans 222–242 (QPLPPHAIPPHPMPQPVPPHH). Low complexity predominate over residues 243–260 (QAPQHLPQHPHPLAQQTP). Positions 328–339 (HQRSLSSKSRSI) are enriched in polar residues. Residues 364 to 384 (PRTESADVKAEAKQNDSKEIK) show a composition bias toward basic and acidic residues. Residues 386–397 (PAQPVAPPPPPR) show a composition bias toward pro residues. The segment covering 440 to 452 (RGSATADSSSSTG) has biased composition (low complexity). The segment covering 453–468 (NQTVTPAKANPDTNHS) has biased composition (polar residues). The segment covering 490–501 (PPNPFARPPPPG) has biased composition (pro residues). Positions 503–515 (ASQNSNAYNSNNN) are enriched in low complexity.

Belongs to the MEF2 family. In terms of assembly, interacts with hsp90. Phosphorylation during asexual development.

It is found in the nucleus. In terms of biological role, transcription factor; part of cell wall integrity (CWI) signaling pathway composed of pkcA, the bck1-mkk2-mpka MAPK cascade and the downstream rlmA transcription regulator. The CWI signaling pathway regulates cell wall integrity and pyomelanin formation. CWI also controls oxidative stress response, gliotoxin production, iron adaptation and asexual development. Finally, CWI is constitutively required for A.fumigatus to cope with the temperature increase found in the mammalian lung environment, during infection. Positively regulates the phosphorylation of mpkA. Involved in tolerance to oxidative damage and transcriptional regulation of genes related to oxidative stress adaptation. Directly regulates the expression of regulators of conidiation, including flbB, flbC, brlA, abaA, and rasB, as well as genes involved in cell wall synthesis and remodeling. Specifically associates with the target fumiquinazoline (fmq) cluster genes promoters at conserved motifs (5'-TAWWWWTA-3') during conidiation to supplement mature conidia with fumiquinazoline C. Also controls the DHN-melanin production via binding the promoter of pksP. The polypeptide is Transcription factor rlmA (Aspergillus fumigatus (strain ATCC MYA-4609 / CBS 101355 / FGSC A1100 / Af293) (Neosartorya fumigata)).